Reading from the N-terminus, the 957-residue chain is Glutamyl aminopeptidase (957 aa).

The Cytoplasmic portion of the chain corresponds to 1–18 (MNFAEREGSKRYCIQTKH). The chain crosses the membrane as a helical; Signal-anchor for type II membrane protein span at residues 19–39 (VAILCAVVVGVGLIVGLAVGL). The Extracellular segment spans residues 40–957 (TRSCDSSGDG…EWFFNLLESG (918 aa)). The tract at residues 44–83 (DSSGDGGPGTAPAPSHLPSSTASPSGPPAQDQDICPASED) is disordered. Asn98 is a glycosylation site (N-linked (GlcNAc...) asparagine; atypical). 2 N-linked (GlcNAc...) asparagine glycosylation sites follow: Asn124 and Asn197. Glu223 contributes to the substrate binding site. N-linked (GlcNAc...) asparagine glycans are attached at residues Asn324 and Asn340. Position 357–361 (357–361 (GAMEN)) interacts with substrate. A Zn(2+)-binding site is contributed by His393. The Proton acceptor role is filled by Glu394. Zn(2+) is bound by residues His397 and Glu416. Residues Asn554, Asn589, Asn597, Asn607, Asn678, Asn763, Asn773, Asn801, and Asn828 are each glycosylated (N-linked (GlcNAc...) asparagine). Substrate is bound at residue Arg887.

The protein belongs to the peptidase M1 family. Homodimer; disulfide-linked. It depends on Zn(2+) as a cofactor. In terms of tissue distribution, expressed in choriocarcinoma cancer cell lines (at protein level). Expressed by epithelial cells of the proximal tubule cells and the glomerulus of the nephron. Also found in a variety of other tissues.

The protein resides in the cell membrane. The catalysed reaction is Release of N-terminal glutamate (and to a lesser extent aspartate) from a peptide.. Substrate specificity is modulated by calcium which enhances the enzymatic activity for cleavage of acidic residues while reducing its activity with basic residues. Inhibited by aminopeptidase inhibitors amastatin and bestatin. Functionally, regulates central hypertension through its calcium-modulated preference to cleave N-terminal acidic residues from peptides such as angiotensin II. The polypeptide is Glutamyl aminopeptidase (ENPEP) (Homo sapiens (Human)).